The following is a 256-amino-acid chain: ATP synthase peripheral stalk subunit b, mitochondrial (256 aa).

Residues 1–42 (MLSRVVLSAAATAAPSLKNAAFLGPGVLQATRTFHTGQPHLV) constitute a mitochondrion transit peptide. K131 carries the N6-succinyllysine modification. 6 positions are modified to N6-acetyllysine: K139, K154, K162, K221, K233, and K244.

The protein belongs to the eukaryotic ATPase B chain family. In terms of assembly, component of the ATP synthase complex composed at least of ATP5F1A/subunit alpha, ATP5F1B/subunit beta, ATP5MC1/subunit c (homooctomer), MT-ATP6/subunit a, MT-ATP8/subunit 8, ATP5ME/subunit e, ATP5MF/subunit f, ATP5MG/subunit g, ATP5MK/subunit k, ATP5MJ/subunit j, ATP5F1C/subunit gamma, ATP5F1D/subunit delta, ATP5F1E/subunit epsilon, ATP5PF/subunit F6, ATP5PB/subunit b, ATP5PD/subunit d, ATP5PO/subunit OSCP. ATP synthase complex consists of a soluble F(1) head domain (subunits alpha(3) and beta(3)) - the catalytic core - and a membrane F(0) domain - the membrane proton channel (subunits c, a, 8, e, f, g, k and j). These two domains are linked by a central stalk (subunits gamma, delta, and epsilon) rotating inside the F1 region and a stationary peripheral stalk (subunits F6, b, d, and OSCP).

It localises to the mitochondrion. Its subcellular location is the mitochondrion inner membrane. Subunit b, of the mitochondrial membrane ATP synthase complex (F(1)F(0) ATP synthase or Complex V) that produces ATP from ADP in the presence of a proton gradient across the membrane which is generated by electron transport complexes of the respiratory chain. ATP synthase complex consist of a soluble F(1) head domain - the catalytic core - and a membrane F(1) domain - the membrane proton channel. These two domains are linked by a central stalk rotating inside the F(1) region and a stationary peripheral stalk. During catalysis, ATP synthesis in the catalytic domain of F(1) is coupled via a rotary mechanism of the central stalk subunits to proton translocation. In vivo, can only synthesize ATP although its ATP hydrolase activity can be activated artificially in vitro. Part of the complex F(0) domain. Part of the complex F(0) domain and the peripheric stalk, which acts as a stator to hold the catalytic alpha(3)beta(3) subcomplex and subunit a/ATP6 static relative to the rotary elements. This is ATP synthase peripheral stalk subunit b, mitochondrial from Homo sapiens (Human).